Reading from the N-terminus, the 593-residue chain is Capsid protein 1 (593 aa).

The protein belongs to the NCLDV major capsid protein family.

The protein resides in the virion. The protein is Capsid protein 1 of Acanthamoeba polyphaga mimivirus (APMV).